Reading from the N-terminus, the 532-residue chain is Collagen alpha-1(XXIII) chain (532 aa).

At 1 to 23 (MGAGERAAGGGGAQDPGAGCGSR) the chain is on the cytoplasmic side. Residues 24–45 (ALSALCLLLSVGSAAACLLLGA) traverse the membrane as a helical; Signal-anchor for type II membrane protein segment. Residues 46 to 532 (QAAALHGRVA…GLPVPGCWHK (487 aa)) lie on the Extracellular side of the membrane. Disordered stretches follow at residues 102-296 (PSEC…GEQG) and 308-532 (LDAL…CWHK). 4 Collagen-like domains span residues 108–166 (PPGP…RGAQ), 173–232 (GPPG…PGKK), 240–298 (QPGL…QGDT), and 313–372 (GPPG…MGLS). The span at 129 to 145 (QSGRDGYPGPLGLDGKP) shows a compositional bias: low complexity. Residues 174–184 (PPGPPGPPGAR) show a composition bias toward pro residues. Residues 196–207 (RGAQGPAGPRGE) show a composition bias toward low complexity. A compositionally biased stretch (pro residues) spans 314 to 326 (PPGPQGAPGPPGI). Basic and acidic residues-rich tracts occupy residues 342 to 354 (DGEK…KGDP) and 380 to 393 (PKGE…DHLQ). The span at 403-414 (PGPPGPPGPPGP) shows a compositional bias: pro residues. Collagen-like domains follow at residues 404 to 452 (GPPG…GPPG) and 455 to 514 (GLPG…PGLD). 2 stretches are compositionally biased toward basic and acidic residues: residues 427–441 (DGAK…ERGP) and 478–495 (RGEK…ERGV).

In terms of assembly, homotrimer. Post-translationally, undergoes proteolytic cleavage by furin protease to yield a 60 kDa soluble form that forms a homotrimer and exhibits a low affinity interaction with heparin.

It localises to the cell membrane. The polypeptide is Collagen alpha-1(XXIII) chain (Col23a1) (Mus musculus (Mouse)).